The chain runs to 984 residues: Shutoff protein (984 aa).

A disordered region spans residues 131 to 231 (GVAAESDPSD…DLERDALVAP (101 aa)). A compositionally biased stretch (acidic residues) spans 137 to 147 (DPSDDEPDPEP). Residues 148-159 (EYDHREADHDSD) are compositionally biased toward basic and acidic residues. Residues 176–186 (VDEEPQDDSPS) show a composition bias toward acidic residues. The segment covering 190–202 (TASTVIEEAQTSA) has biased composition (polar residues). Positions 205–216 (DSHDDDTHRDDG) are enriched in basic and acidic residues. Positions 411–476 (LMETLLQPFA…AVRYTATLEL (66 aa)) are binding to host EIF4G. The region spanning 479 to 597 (RVFREPSMVK…RLYSLPNPTA (119 aa)) is the RRM domain. Disordered stretches follow at residues 810-853 (GVYK…GNRA) and 876-984 (KVGP…RQEE). A Phosphotyrosine; by host modification is found at tyrosine 812. Residues 913–923 (AGGRRFGRRNT) are compositionally biased toward basic residues. The segment covering 945–958 (RGQQGEHPTTSPSA) has biased composition (low complexity).

It belongs to the adenoviridae shutoff protein family. As to quaternary structure, monomer. Interacts with hexon protein; this interaction allows chaperoning and trimerization of hexon proteins. Interacts (via N-terminus) with host initiation factor EIF4G (via C-terminus). Interacts (via RRM domain) with viral mRNAs that contain the tripartite leader; this interaction allows ribosome shunting and expression of viral late mRNAs. Might be cleaved by the viral protease. Post-translationally, phosphorylated. Tyrosine phosphorylation enhances preferential binding to tripartite leader mRNAs and allows ribosome shunting. In terms of processing, methylated. Asymmetric dimethylation by host PRMT1 of the Arg/Gly-rich region may regulate shutoff protein binding to hexon and promote the capsid assembly in the nucleus.

It localises to the host cytoplasm. Its function is as follows. Protein that inhibits host translation while promoting late viral translation by ribosome shunting. Blocks host cap-dependent translation by binding to eIF4G, displacing MKNK1 from cap initiation complexes and preventing EIF4E phosphorylation. Binds to the tripartite leader sequence of viral late mRNAs and recruits host eIF4G, PABPC1/poly-A binding protein and 40S ribosomes subunits on viral mRNAs, allowing ribosome shunting and efficient translation of late viral mRNAs even though conventional translation via ribosome scanning from the cap has been shut off in the host cell. During assembly, acts as a chaperone protein that helps hexon proteins assembly into trimers. The protein is Shutoff protein of Galliformes (FAdV-1).